The primary structure comprises 319 residues: Beta-ketoacyl-[acyl-carrier-protein] synthase III (319 aa).

Active-site residues include Cys113 and His246. Residues 247 to 251 (QANIR) are ACP-binding. Asn276 is a catalytic residue.

This sequence belongs to the thiolase-like superfamily. FabH family. In terms of assembly, homodimer.

It localises to the cytoplasm. It catalyses the reaction malonyl-[ACP] + acetyl-CoA + H(+) = 3-oxobutanoyl-[ACP] + CO2 + CoA. The protein operates within lipid metabolism; fatty acid biosynthesis. Catalyzes the condensation reaction of fatty acid synthesis by the addition to an acyl acceptor of two carbons from malonyl-ACP. Catalyzes the first condensation reaction which initiates fatty acid synthesis and may therefore play a role in governing the total rate of fatty acid production. Possesses both acetoacetyl-ACP synthase and acetyl transacylase activities. Its substrate specificity determines the biosynthesis of branched-chain and/or straight-chain of fatty acids. In Ehrlichia canis (strain Jake), this protein is Beta-ketoacyl-[acyl-carrier-protein] synthase III.